The following is a 238-amino-acid chain: MKGRSLNAEDRARLEAAIGYQFAEKERLDRALTHSSARSGRAINYQRLEFLGDRILGLCVAELLFQTFSDANEGELSVRLNQLVSAESCAKVADELSLHEFIRTGSDVKKITGKHMMNVRADVVESLIAAIYLDGGLEAARRFVLEHWTHRAASADGARRDAKTELQEWAHARFGVAPKYRTEDRSGPDHDPRFTVTVEVDGIDPETGVDRSKRGAEQVAAMKLLEREGVWQKRSAGN.

The region spanning 11–136 (RARLEAAIGY…LIAAIYLDGG (126 aa)) is the RNase III domain. Residue Glu-49 coordinates Mg(2+). Asp-53 is a catalytic residue. Mg(2+) is bound by residues Asp-122 and Glu-125. Glu-125 is an active-site residue. Residues 161 to 230 (DAKTELQEWA…AMKLLEREGV (70 aa)) enclose the DRBM domain. Residues 180-193 (YRTEDRSGPDHDPR) show a composition bias toward basic and acidic residues. Residues 180–215 (YRTEDRSGPDHDPRFTVTVEVDGIDPETGVDRSKRG) are disordered.

The protein belongs to the ribonuclease III family. In terms of assembly, homodimer. The cofactor is Mg(2+).

It is found in the cytoplasm. The catalysed reaction is Endonucleolytic cleavage to 5'-phosphomonoester.. Digests double-stranded RNA. Involved in the processing of primary rRNA transcript to yield the immediate precursors to the large and small rRNAs (23S and 16S). Processes some mRNAs, and tRNAs when they are encoded in the rRNA operon. Processes pre-crRNA and tracrRNA of type II CRISPR loci if present in the organism. This Sinorhizobium medicae (strain WSM419) (Ensifer medicae) protein is Ribonuclease 3.